A 70-amino-acid chain; its full sequence is U2-agatoxin-Ao1d (70 aa).

The N-terminal stretch at M1–A20 is a signal peptide. The propeptide occupies V21 to R34. Cystine bridges form between C37–C53, C44–C58, and C52–C68. L69 bears the Leucine amide mark.

This sequence belongs to the neurotoxin 01 (U2-agtx) family. As to expression, expressed by the venom gland.

It is found in the secreted. Insect active toxin causing rapid but reversible paralysis in crickets. No activity shown in mammals. Does not show effect on mammalian voltage-gated calcium channels. This is U2-agatoxin-Ao1d from Agelena orientalis (Funnel-web spider).